The sequence spans 656 residues: UvrABC system protein B (656 aa).

The Helicase ATP-binding domain occupies 24 to 409; the sequence is QGVRNRTPSQ…QGHIVEQILR (386 aa). 37–44 is a binding site for ATP; sequence GTTGSGKT. Positions 90–113 match the Beta-hairpin motif; it reads YYDYYQPEAYIARNDTYIEKSLLI. Residues 426-589 enclose the Helicase C-terminal domain; sequence QVDDLLEEIR…ITPKPIIKAI (164 aa). In terms of domain architecture, UVR spans 616–651; sequence EKLIKKYENLMLQAANAFRFDEAAQYRDKMKAAKEQ.

This sequence belongs to the UvrB family. As to quaternary structure, forms a heterotetramer with UvrA during the search for lesions. Interacts with UvrC in an incision complex.

It localises to the cytoplasm. Its function is as follows. The UvrABC repair system catalyzes the recognition and processing of DNA lesions. A damage recognition complex composed of 2 UvrA and 2 UvrB subunits scans DNA for abnormalities. Upon binding of the UvrA(2)B(2) complex to a putative damaged site, the DNA wraps around one UvrB monomer. DNA wrap is dependent on ATP binding by UvrB and probably causes local melting of the DNA helix, facilitating insertion of UvrB beta-hairpin between the DNA strands. Then UvrB probes one DNA strand for the presence of a lesion. If a lesion is found the UvrA subunits dissociate and the UvrB-DNA preincision complex is formed. This complex is subsequently bound by UvrC and the second UvrB is released. If no lesion is found, the DNA wraps around the other UvrB subunit that will check the other stand for damage. The chain is UvrABC system protein B from Chlamydia abortus (strain DSM 27085 / S26/3) (Chlamydophila abortus).